The following is a 101-amino-acid chain: Protein Tat (101 aa).

Residues 1–24 (MEPVDPNLEPWKHPGSQPRTACTN) are interaction with human CREBBP. Residues 1–48 (MEPVDPNLEPWKHPGSQPRTACTNCYCKKCCFHCQVCFITKGLGISYG) are transactivation. 3 residues coordinate Zn(2+): Cys-22, Cys-25, and Cys-27. A cysteine-rich region spans residues 22–37 (CTNCYCKKCCFHCQVC). Residue Lys-28 is modified to N6-acetyllysine; by host PCAF. Residues Cys-30, His-33, Cys-34, and Cys-37 each contribute to the Zn(2+) site. The interval 38–48 (FITKGLGISYG) is core. A disordered region spans residues 48 to 101 (GRKKRRQRQRAPDSSQNHQDSLSKQPSSQPRGDPTGPKESKKEVERETETDPLD). The Nuclear localization signal, RNA-binding (TAR), and protein transduction motif lies at 49–57 (RKKRRQRQR). The interaction with the host capping enzyme RNGTT stretch occupies residues 49–86 (RKKRRQRQRAPDSSQNHQDSLSKQPSSQPRGDPTGPKE). 2 positions are modified to N6-acetyllysine; by host EP300 and GCN5L2: Lys-50 and Lys-51. Arg-52 and Arg-53 each carry asymmetric dimethylarginine; by host PRMT6. Positions 59 to 77 (PDSSQNHQDSLSKQPSSQP) are enriched in polar residues. Residue Lys-71 forms a Glycyl lysine isopeptide (Lys-Gly) (interchain with G-Cter in ubiquitin) linkage. The Cell attachment site motif lies at 78–80 (RGD). Positions 83-101 (GPKESKKEVERETETDPLD) are enriched in basic and acidic residues.

Belongs to the lentiviruses Tat family. Interacts with host CCNT1. Associates with the P-TEFb complex composed at least of Tat, P-TEFb (CDK9 and CCNT1), TAR RNA, RNA Pol II. Recruits the HATs CREBBP, TAF1/TFIID, EP300, PCAF and GCN5L2. Interacts with host KAT5/Tip60; this interaction targets the latter to degradation. Interacts with the host deacetylase SIRT1. Interacts with host capping enzyme RNGTT; this interaction stimulates RNGTT. Binds to host KDR, and to the host integrins ITGAV/ITGB3 and ITGA5/ITGB1. Interacts with host KPNB1/importin beta-1 without previous binding to KPNA1/importin alpha-1. Interacts with EIF2AK2. Interacts with host nucleosome assembly protein NAP1L1; this interaction may be required for the transport of Tat within the nucleus, since the two proteins interact at the nuclear rim. Interacts with host C1QBP/SF2P32; this interaction involves lysine-acetylated Tat. Interacts with the host chemokine receptors CCR2, CCR3 and CXCR4. Interacts with host DPP4/CD26; this interaction may trigger an anti-proliferative effect. Interacts with host LDLR. Interacts with the host extracellular matrix metalloproteinase MMP1. Interacts with host PRMT6; this interaction mediates Tat's methylation. Interacts with, and is ubiquitinated by MDM2/Hdm2. Interacts with host PSMC3 and HTATIP2. Interacts with STAB1; this interaction may overcome SATB1-mediated repression of IL2 and IL2RA (interleukin) in T cells by binding to the same domain than HDAC1. Interacts (when acetylated) with human CDK13, thereby increasing HIV-1 mRNA splicing and promoting the production of the doubly spliced HIV-1 protein Nef. Interacts with host TBP; this interaction modulates the activity of transcriptional pre-initiation complex. Interacts with host RELA. Interacts with host PLSCR1; this interaction negatively regulates Tat transactivation activity by altering its subcellular distribution. In terms of processing, asymmetrical arginine methylation by host PRMT6 seems to diminish the transactivation capacity of Tat and affects the interaction with host CCNT1. Acetylation by EP300, CREBBP, GCN5L2/GCN5 and PCAF regulates the transactivation activity of Tat. EP300-mediated acetylation of Lys-50 promotes dissociation of Tat from the TAR RNA through the competitive binding to PCAF's bromodomain. In addition, the non-acetylated Tat's N-terminus can also interact with PCAF. PCAF-mediated acetylation of Lys-28 enhances Tat's binding to CCNT1. Lys-50 is deacetylated by SIRT1. Post-translationally, polyubiquitination by host MDM2 does not target Tat to degradation, but activates its transactivation function and fosters interaction with CCNT1 and TAR RNA. In terms of processing, phosphorylated by EIF2AK2 on serine and threonine residues adjacent to the basic region important for TAR RNA binding and function. Phosphorylation of Tat by EIF2AK2 is dependent on the prior activation of EIF2AK2 by dsRNA.

Its subcellular location is the host nucleus. The protein localises to the host nucleolus. It is found in the host cytoplasm. The protein resides in the secreted. Its function is as follows. Transcriptional activator that increases RNA Pol II processivity, thereby increasing the level of full-length viral transcripts. Recognizes a hairpin structure at the 5'-LTR of the nascent viral mRNAs referred to as the transactivation responsive RNA element (TAR) and recruits the cyclin T1-CDK9 complex (P-TEFb complex) that will in turn hyperphosphorylate the RNA polymerase II to allow efficient elongation. The CDK9 component of P-TEFb and other Tat-activated kinases hyperphosphorylate the C-terminus of RNA Pol II that becomes stabilized and much more processive. Other factors such as HTATSF1/Tat-SF1, SUPT5H/SPT5, and HTATIP2 are also important for Tat's function. Besides its effect on RNA Pol II processivity, Tat induces chromatin remodeling of proviral genes by recruiting the histone acetyltransferases (HATs) CREBBP, EP300 and PCAF to the chromatin. This also contributes to the increase in proviral transcription rate, especially when the provirus integrates in transcriptionally silent region of the host genome. To ensure maximal activation of the LTR, Tat mediates nuclear translocation of NF-kappa-B by interacting with host RELA. Through its interaction with host TBP, Tat may also modulate transcription initiation. Tat can reactivate a latently infected cell by penetrating in it and transactivating its LTR promoter. In the cytoplasm, Tat is thought to act as a translational activator of HIV-1 mRNAs. Extracellular circulating Tat can be endocytosed by surrounding uninfected cells via the binding to several surface receptors such as CD26, CXCR4, heparan sulfate proteoglycans (HSPG) or LDLR. Neurons are rarely infected, but they internalize Tat via their LDLR. Through its interaction with nuclear HATs, Tat is potentially able to control the acetylation-dependent cellular gene expression. Modulates the expression of many cellular genes involved in cell survival, proliferation or in coding for cytokines or cytokine receptors. Tat plays a role in T-cell and neurons apoptosis. Tat induced neurotoxicity and apoptosis probably contribute to neuroAIDS. Circulating Tat also acts as a chemokine-like and/or growth factor-like molecule that binds to specific receptors on the surface of the cells, affecting many cellular pathways. In the vascular system, Tat binds to ITGAV/ITGB3 and ITGA5/ITGB1 integrins dimers at the surface of endothelial cells and competes with bFGF for heparin-binding sites, leading to an excess of soluble bFGF. This chain is Protein Tat, found in Human immunodeficiency virus type 1 group M subtype B (isolate SF33) (HIV-1).